Here is a 365-residue protein sequence, read N- to C-terminus: Chorismate synthase (365 aa).

Arg-48 and Arg-54 together coordinate NADP(+). Residues 131 to 133 (RSS), 243 to 244 (NA), Gly-288, 303 to 307 (KPTSS), and Arg-329 contribute to the FMN site.

It belongs to the chorismate synthase family. In terms of assembly, homotetramer. The cofactor is FMNH2.

The catalysed reaction is 5-O-(1-carboxyvinyl)-3-phosphoshikimate = chorismate + phosphate. The protein operates within metabolic intermediate biosynthesis; chorismate biosynthesis; chorismate from D-erythrose 4-phosphate and phosphoenolpyruvate: step 7/7. Functionally, catalyzes the anti-1,4-elimination of the C-3 phosphate and the C-6 proR hydrogen from 5-enolpyruvylshikimate-3-phosphate (EPSP) to yield chorismate, which is the branch point compound that serves as the starting substrate for the three terminal pathways of aromatic amino acid biosynthesis. This reaction introduces a second double bond into the aromatic ring system. The polypeptide is Chorismate synthase (Agrobacterium fabrum (strain C58 / ATCC 33970) (Agrobacterium tumefaciens (strain C58))).